The chain runs to 116 residues: Small ribosomal subunit protein bS16 (116 aa).

Residues 88 to 116 (RNNPKAAVPGKRMAELAKKKAERAAASAE) form a disordered region. A compositionally biased stretch (basic and acidic residues) spans 99–110 (RMAELAKKKAER).

This sequence belongs to the bacterial ribosomal protein bS16 family.

This Cereibacter sphaeroides (strain ATCC 17025 / ATH 2.4.3) (Rhodobacter sphaeroides) protein is Small ribosomal subunit protein bS16.